The sequence spans 384 residues: Lipid-A-disaccharide synthase (384 aa).

It belongs to the LpxB family.

It catalyses the reaction a lipid X + a UDP-2-N,3-O-bis[(3R)-3-hydroxyacyl]-alpha-D-glucosamine = a lipid A disaccharide + UDP + H(+). It functions in the pathway bacterial outer membrane biogenesis; LPS lipid A biosynthesis. Condensation of UDP-2,3-diacylglucosamine and 2,3-diacylglucosamine-1-phosphate to form lipid A disaccharide, a precursor of lipid A, a phosphorylated glycolipid that anchors the lipopolysaccharide to the outer membrane of the cell. The sequence is that of Lipid-A-disaccharide synthase from Gloeothece citriformis (strain PCC 7424) (Cyanothece sp. (strain PCC 7424)).